Here is a 185-residue protein sequence, read N- to C-terminus: Peptide deformylase (185 aa).

Residues Cys-94 and His-136 each coordinate Fe cation. The active site involves Glu-137. His-140 contributes to the Fe cation binding site.

This sequence belongs to the polypeptide deformylase family. Fe(2+) is required as a cofactor.

It carries out the reaction N-terminal N-formyl-L-methionyl-[peptide] + H2O = N-terminal L-methionyl-[peptide] + formate. Its function is as follows. Removes the formyl group from the N-terminal Met of newly synthesized proteins. Requires at least a dipeptide for an efficient rate of reaction. N-terminal L-methionine is a prerequisite for activity but the enzyme has broad specificity at other positions. This chain is Peptide deformylase, found in Chlorobium phaeobacteroides (strain BS1).